Consider the following 217-residue polypeptide: Ras-related protein Rab-39A (217 aa).

GTP-binding residues include Ser17, Gly20, Lys21, Ser22, Cys23, and Thr44. Mg(2+) is bound at residue Ser22. Positions 39–47 (PACDPTVGV) are switch-I. Positions 44 and 68 each coordinate Mg(2+). GTP is bound by residues Gly71, His127, Lys128, Asp130, Ala158, and Lys159. Residues 71–87 (GQERFRSITRSYYRNSV) are switch-II. S-geranylgeranyl cysteine attachment occurs at residues Cys215 and Cys217. At Cys217 the chain carries Cysteine methyl ester.

The protein belongs to the small GTPase superfamily. Rab family. In terms of assembly, interacts (GDP-bound) with C9orf72; C9orf72 acts as a GEF for RAB39A. Interacts (GTP-bound) with HOPS complex components VPS39 and VPS41, and STX17; interaction between HOPS components and RAB39A contributes to obtaining a functional HOPS complex that promotes membrane fusion driven by STX17-SNAP29-VAMP8. Interacts with BECN1. Probably associates with the PI3K (PI3KC3/PI3K-III/class III phosphatidylinositol 3-kinase) complex. Interacts with UACA. Interacts with isoform a of RASSF1. Does not interact with isoform c of RASSF1. Mg(2+) is required as a cofactor. Post-translationally, prenylated. Prenylation is required for association with cellular membranes.

The protein resides in the cell membrane. It localises to the cytoplasmic vesicle. The protein localises to the phagosome membrane. Its subcellular location is the late endosome membrane. It is found in the lysosome membrane. The protein resides in the autolysosome membrane. It carries out the reaction GTP + H2O = GDP + phosphate + H(+). Regulated by guanine nucleotide exchange factors (GEFs) including c9Orf72, which promote the exchange of bound GDP for free GTP. Regulated by GTPase activating proteins (GAPs) which increase the GTP hydrolysis activity. Inhibited by GDP dissociation inhibitors (GDIs). Its function is as follows. The small GTPases Rab are key regulators of intracellular membrane trafficking, from the formation of transport vesicles to their fusion with membranes. Rabs cycle between an inactive GDP-bound form and an active GTP-bound form that is able to recruit to membranes different sets of downstream effectors directly responsible for vesicle formation, movement, tethering and fusion. RAB39A regulates autophagosome-lysosome fusion via recruitment of the HOPS endosomal tethering complex onto lysosomes; this process involves lysosomal RAB39A and autophagosomal RAB2A recruitment of HOPS subcomplexes VPS41-VPS16-VPS18-VPS33A and VPS39-VPS11, respectively, which assemble into a functional complex to mediate membrane tethering and SNAREs-driven membrane fusion. Also negatively regulates lipopolysaccharide (LPS)-induced autophagosome formation in macrophages, possibly by implicating PI3K. Promotes the delivery of MHC-I molecules from the ER to phagosomes and the generation of peptide-loaded MHC-I complexes in phagosomes, thus enhancing antigen cross-presentation by dendritic cells. Plays a role in the maturation and acidification of phagosomes that engulf pathogens, such as S.aureus and M.tuberculosis. Plays a role in the fusion of phagosomes with lysosomes. May be involved in multiple neurite formation. This Mus musculus (Mouse) protein is Ras-related protein Rab-39A.